A 362-amino-acid chain; its full sequence is Peptide chain release factor 1 (362 aa).

Glutamine 235 carries the N5-methylglutamine modification.

It belongs to the prokaryotic/mitochondrial release factor family. In terms of processing, methylated by PrmC. Methylation increases the termination efficiency of RF1.

It localises to the cytoplasm. Its function is as follows. Peptide chain release factor 1 directs the termination of translation in response to the peptide chain termination codons UAG and UAA. In Acinetobacter baumannii (strain ACICU), this protein is Peptide chain release factor 1.